The following is a 313-amino-acid chain: Protoheme IX farnesyltransferase (313 aa).

Transmembrane regions (helical) follow at residues 35–55 (LVVF…HPVL), 56–76 (AATS…LNMW), 98–118 (VSSP…VATL), 120–140 (VLVN…YAVV), 153–173 (IVIG…AATG), 180–200 (IILF…LALF), 226–246 (ILLY…LGYF), 248–268 (AAYG…AFNV), and 292–312 (LFLL…AAMI).

This sequence belongs to the UbiA prenyltransferase family. Protoheme IX farnesyltransferase subfamily.

It is found in the cell inner membrane. It catalyses the reaction heme b + (2E,6E)-farnesyl diphosphate + H2O = Fe(II)-heme o + diphosphate. It participates in porphyrin-containing compound metabolism; heme O biosynthesis; heme O from protoheme: step 1/1. In terms of biological role, converts heme B (protoheme IX) to heme O by substitution of the vinyl group on carbon 2 of heme B porphyrin ring with a hydroxyethyl farnesyl side group. The chain is Protoheme IX farnesyltransferase from Afipia carboxidovorans (strain ATCC 49405 / DSM 1227 / KCTC 32145 / OM5) (Oligotropha carboxidovorans).